Reading from the N-terminus, the 604-residue chain is Cytosolic Fe-S cluster assembly factor nar1 (604 aa).

[4Fe-4S] cluster is bound by residues Cys20, Cys62, Cys65, Cys68, Cys215, and Cys270. Positions 434 to 461 (LPGAKPAVRPAAGRRQPMSRNAVSTGSS) are disordered. A compositionally biased stretch (polar residues) spans 451-461 (MSRNAVSTGSS). Residues Cys473 and Cys477 each contribute to the [4Fe-4S] cluster site.

It belongs to the NARF family.

In terms of biological role, component of the cytosolic Fe/S protein assembly machinery. Required for maturation of extramitochondrial Fe/S proteins. May play a role in the transfer of pre-assembled Fe/S clusters to target apoproteins. This Penicillium rubens (strain ATCC 28089 / DSM 1075 / NRRL 1951 / Wisconsin 54-1255) (Penicillium chrysogenum) protein is Cytosolic Fe-S cluster assembly factor nar1 (nar1).